A 463-amino-acid polypeptide reads, in one-letter code: Fumarate hydratase class II (463 aa).

Residues 95–97 (SGT), 126–129 (HPND), 136–138 (SSN), and T184 contribute to the substrate site. The Proton donor/acceptor role is filled by H185. Residue S315 is part of the active site. Substrate is bound by residues S316 and 321–323 (KIN).

It belongs to the class-II fumarase/aspartase family. Fumarase subfamily. In terms of assembly, homotetramer.

It is found in the cytoplasm. It catalyses the reaction (S)-malate = fumarate + H2O. The protein operates within carbohydrate metabolism; tricarboxylic acid cycle; (S)-malate from fumarate: step 1/1. Involved in the TCA cycle. Catalyzes the stereospecific interconversion of fumarate to L-malate. The protein is Fumarate hydratase class II of Chlamydia muridarum (strain MoPn / Nigg).